The chain runs to 180 residues: Riboflavin kinase (180 aa).

Positions 40 and 42 each coordinate Mg(2+). Residue Glu117 is the Nucleophile of the active site.

This sequence belongs to the flavokinase family. It depends on Zn(2+) as a cofactor. Mg(2+) is required as a cofactor.

It catalyses the reaction riboflavin + ATP = FMN + ADP + H(+). Its pathway is cofactor biosynthesis; FMN biosynthesis; FMN from riboflavin (ATP route): step 1/1. Catalyzes the phosphorylation of riboflavin (vitamin B2) to form flavin mononucleotide (FMN) coenzyme. The sequence is that of Riboflavin kinase (FMN1) from Meyerozyma guilliermondii (strain ATCC 6260 / CBS 566 / DSM 6381 / JCM 1539 / NBRC 10279 / NRRL Y-324) (Yeast).